Here is a 157-residue protein sequence, read N- to C-terminus: Ribosomal RNA large subunit methyltransferase H (157 aa).

Residues leucine 73, glycine 104, and 123 to 128 each bind S-adenosyl-L-methionine; that span reads LGPLTL.

This sequence belongs to the RNA methyltransferase RlmH family. In terms of assembly, homodimer.

It is found in the cytoplasm. It catalyses the reaction pseudouridine(1915) in 23S rRNA + S-adenosyl-L-methionine = N(3)-methylpseudouridine(1915) in 23S rRNA + S-adenosyl-L-homocysteine + H(+). Specifically methylates the pseudouridine at position 1915 (m3Psi1915) in 23S rRNA. The protein is Ribosomal RNA large subunit methyltransferase H of Xylella fastidiosa (strain M23).